A 492-amino-acid polypeptide reads, in one-letter code: N-succinylglutamate 5-semialdehyde dehydrogenase (492 aa).

Gly220–Gly225 is an NAD(+) binding site. Catalysis depends on residues Glu243 and Cys277.

This sequence belongs to the aldehyde dehydrogenase family. AstD subfamily.

It catalyses the reaction N-succinyl-L-glutamate 5-semialdehyde + NAD(+) + H2O = N-succinyl-L-glutamate + NADH + 2 H(+). It participates in amino-acid degradation; L-arginine degradation via AST pathway; L-glutamate and succinate from L-arginine: step 4/5. In terms of biological role, catalyzes the NAD-dependent reduction of succinylglutamate semialdehyde into succinylglutamate. The polypeptide is N-succinylglutamate 5-semialdehyde dehydrogenase (Escherichia coli O17:K52:H18 (strain UMN026 / ExPEC)).